Here is a 606-residue protein sequence, read N- to C-terminus: MTPSVLERYQSAPQNPGVYLMKDKRGTIIYVGKALNLKKRLASYFARETGHDMKTGVLLKKVVDFDLIVTATEHEALILESTLIKKHSPRYNVILKDGKSYPCLRIDTSKPFPALEVVRKIGDDNAVYFGPYSSVQSVRSTIKQVNKIFKLRKCRDVQFANRTRPCLNYQINACLGACCNRVSRQEYARVVGDVILFLKGRAPDLINRLKFEMQTEADLEHFERAAQIRDTILAIQTTLERQVVVSTDRTDRDVIACAINGEKAVVTILFVRSGNLVGSRNYPFDTGLSGVPEILDAFVRHYYERSLFIPGQILIAEKIENHGLVQDLLIEKRGKRVSLVVPERGDKRRLVEMALVNAQKELEKNLSIQNEAWETLTALQTILGMSVYPRRIECFDNSNMAGTDPVSSMVVFVDGLACKSEYRKFIIRDAKENDDYACMTEVLTRRLSSTEAPLPDLLVVDGGKGQLSMAVAVLKSLGLENRFQVAGLAKKDAKLGEVYDKIYLPGRANPVNTRGALKALYLVQRLRDEAHRFAITFQRKRRSKRAGTSVLDAVPGIGKKRKQVLMTTYKGISRMGQATVEELASLPGMTLAAAQQVKSALALDKD.

A GIY-YIG domain is found at 14–93 (QNPGVYLMKD…IKKHSPRYNV (80 aa)). The UVR domain maps to 203-238 (PDLINRLKFEMQTEADLEHFERAAQIRDTILAIQTT).

Belongs to the UvrC family. Interacts with UvrB in an incision complex.

It localises to the cytoplasm. The UvrABC repair system catalyzes the recognition and processing of DNA lesions. UvrC both incises the 5' and 3' sides of the lesion. The N-terminal half is responsible for the 3' incision and the C-terminal half is responsible for the 5' incision. This chain is UvrABC system protein C, found in Desulforapulum autotrophicum (strain ATCC 43914 / DSM 3382 / VKM B-1955 / HRM2) (Desulfobacterium autotrophicum).